The following is a 99-amino-acid chain: Aspartyl/glutamyl-tRNA(Asn/Gln) amidotransferase subunit C (99 aa).

Belongs to the GatC family. In terms of assembly, heterotrimer of A, B and C subunits.

It carries out the reaction L-glutamyl-tRNA(Gln) + L-glutamine + ATP + H2O = L-glutaminyl-tRNA(Gln) + L-glutamate + ADP + phosphate + H(+). The enzyme catalyses L-aspartyl-tRNA(Asn) + L-glutamine + ATP + H2O = L-asparaginyl-tRNA(Asn) + L-glutamate + ADP + phosphate + 2 H(+). Allows the formation of correctly charged Asn-tRNA(Asn) or Gln-tRNA(Gln) through the transamidation of misacylated Asp-tRNA(Asn) or Glu-tRNA(Gln) in organisms which lack either or both of asparaginyl-tRNA or glutaminyl-tRNA synthetases. The reaction takes place in the presence of glutamine and ATP through an activated phospho-Asp-tRNA(Asn) or phospho-Glu-tRNA(Gln). This chain is Aspartyl/glutamyl-tRNA(Asn/Gln) amidotransferase subunit C, found in Cupriavidus taiwanensis (strain DSM 17343 / BCRC 17206 / CCUG 44338 / CIP 107171 / LMG 19424 / R1) (Ralstonia taiwanensis (strain LMG 19424)).